A 478-amino-acid chain; its full sequence is BTB/POZ domain-containing protein 17 (478 aa).

The N-terminal stretch at 1–28 (MLRKGSCKPGSWGSFWAILALVGLVTRA) is a signal peptide. Residues asparagine 61, asparagine 100, asparagine 195, and asparagine 307 are each glycosylated (N-linked (GlcNAc...) asparagine). Positions 63 to 132 (SDVILRVQAV…LYCGELTVLL (70 aa)) constitute a BTB domain. Positions 169–269 (AVGWYHYAVS…IPPAQLFQLQ (101 aa)) constitute a BACK domain.

It localises to the secreted. The sequence is that of BTB/POZ domain-containing protein 17 (Btbd17) from Mus musculus (Mouse).